Consider the following 365-residue polypeptide: tRNA/tmRNA (uracil-C(5))-methyltransferase (365 aa).

Positions 189, 217, 222, 238, and 298 each coordinate S-adenosyl-L-methionine. Cysteine 323 serves as the catalytic Nucleophile. Glutamate 357 acts as the Proton acceptor in catalysis.

This sequence belongs to the class I-like SAM-binding methyltransferase superfamily. RNA M5U methyltransferase family. TrmA subfamily.

The catalysed reaction is uridine(54) in tRNA + S-adenosyl-L-methionine = 5-methyluridine(54) in tRNA + S-adenosyl-L-homocysteine + H(+). The enzyme catalyses uridine(341) in tmRNA + S-adenosyl-L-methionine = 5-methyluridine(341) in tmRNA + S-adenosyl-L-homocysteine + H(+). Functionally, dual-specificity methyltransferase that catalyzes the formation of 5-methyluridine at position 54 (m5U54) in all tRNAs, and that of position 341 (m5U341) in tmRNA (transfer-mRNA). The chain is tRNA/tmRNA (uracil-C(5))-methyltransferase from Shewanella pealeana (strain ATCC 700345 / ANG-SQ1).